Reading from the N-terminus, the 106-residue chain is U1-lycotoxin-Ls1b (106 aa).

The signal sequence occupies residues 1–19 (MKVLVVVALLVTLISYSSS). The propeptide occupies 20-40 (EGIDDLEADELLSLMANEQTR). 4 disulfides stabilise this stretch: C43–C58, C50–C67, C57–C85, and C69–C83.

This sequence belongs to the neurotoxin 19 (CSTX) family. 04 (U1-Lctx) subfamily. Expressed by the venom gland.

The protein localises to the secreted. This Lycosa singoriensis (Wolf spider) protein is U1-lycotoxin-Ls1b.